Here is a 205-residue protein sequence, read N- to C-terminus: Thymidylate kinase (205 aa).

11–18 (GPEGSGKT) provides a ligand contact to ATP.

It belongs to the thymidylate kinase family.

It carries out the reaction dTMP + ATP = dTDP + ADP. Phosphorylation of dTMP to form dTDP in both de novo and salvage pathways of dTTP synthesis. This chain is Thymidylate kinase, found in Clostridium novyi (strain NT).